The chain runs to 145 residues: Large ribosomal subunit protein bL17 (145 aa).

Belongs to the bacterial ribosomal protein bL17 family. As to quaternary structure, part of the 50S ribosomal subunit. Contacts protein L32.

This is Large ribosomal subunit protein bL17 from Francisella tularensis subsp. holarctica (strain FTNF002-00 / FTA).